The primary structure comprises 159 residues: S-ribosylhomocysteine lyase (159 aa).

Residues His53, His57, and Cys124 each contribute to the Fe cation site.

The protein belongs to the LuxS family. Homodimer. Fe cation is required as a cofactor.

It carries out the reaction S-(5-deoxy-D-ribos-5-yl)-L-homocysteine = (S)-4,5-dihydroxypentane-2,3-dione + L-homocysteine. Functionally, involved in the synthesis of autoinducer 2 (AI-2) which is secreted by bacteria and is used to communicate both the cell density and the metabolic potential of the environment. The regulation of gene expression in response to changes in cell density is called quorum sensing. Catalyzes the transformation of S-ribosylhomocysteine (RHC) to homocysteine (HC) and 4,5-dihydroxy-2,3-pentadione (DPD). This is S-ribosylhomocysteine lyase from Porphyromonas gingivalis (strain ATCC BAA-308 / W83).